Consider the following 373-residue polypeptide: Leucine aminopeptidase 1 (373 aa).

The first 18 residues, 1–18 (MKLLSVLALSATATSVLG), serve as a signal peptide directing secretion. The N-linked (GlcNAc...) asparagine glycan is linked to N136. Positions 176 and 195 each coordinate Zn(2+). N-linked (GlcNAc...) asparagine glycosylation is present at N196. Zn(2+) contacts are provided by E234 and D261. Residue N284 is glycosylated (N-linked (GlcNAc...) asparagine). C310 and C314 form a disulfide bridge. H343 provides a ligand contact to Zn(2+).

It belongs to the peptidase M28 family. M28E subfamily. In terms of assembly, monomer. The cofactor is Zn(2+).

It is found in the secreted. Extracellular aminopeptidase which contributes to pathogenicity. The sequence is that of Leucine aminopeptidase 1 (LAP1) from Trichophyton equinum (Horse ringworm fungus).